A 65-amino-acid chain; its full sequence is Hirudin-3 (65 aa).

The tract at residues 1–3 is interaction with thrombin active site; it reads VVY. Intrachain disulfides connect cysteine 6-cysteine 14, cysteine 16-cysteine 28, and cysteine 22-cysteine 39. Positions 39-65 are disordered; it reads CVTGEGTPKPQSHNDGDFEEIPEEYLQ. Threonine 45 is a glycosylation site (O-linked (GalNAc...) threonine). Residues 55–65 form an interaction with fibrinogen-binding exosite of thrombin region; it reads DFEEIPEEYLQ. The segment covering 55 to 65 has biased composition (acidic residues); that stretch reads DFEEIPEEYLQ. A Sulfotyrosine modification is found at tyrosine 63.

Belongs to the protease inhibitor I14 (hirudin) family.

It is found in the secreted. Functionally, hirudin is a potent thrombin-specific protease inhibitor. It forms a stable non-covalent complex with alpha-thrombin, thereby abolishing its ability to cleave fibrinogen. This is Hirudin-3 from Hirudo medicinalis (Medicinal leech).